A 58-amino-acid chain; its full sequence is Small ribosomal subunit protein bS21 (58 aa).

Residues 37 to 58 (FYEKPSVKRKRKSEAARKRKKF) form a disordered region. The span at 43 to 58 (VKRKRKSEAARKRKKF) shows a compositional bias: basic residues.

The protein belongs to the bacterial ribosomal protein bS21 family.

This chain is Small ribosomal subunit protein bS21, found in Streptococcus sanguinis (strain SK36).